The sequence spans 438 residues: Chromosomal replication initiator protein DnaA (438 aa).

The domain I, interacts with DnaA modulators stretch occupies residues 1–71 (MTELDSLWEA…VEIVYQRTGQ (71 aa)). The tract at residues 71–101 (QEIRPDYVLATDPTPLAQTPPRPQSTFKEET) is domain II. The segment at 81–100 (TDPTPLAQTPPRPQSTFKEE) is disordered. The domain III, AAA+ region stretch occupies residues 102-318 (PLNPEYTFQT…GALMRIRVFS (217 aa)). The ATP site is built by glycine 146, glycine 148, lysine 149, and threonine 150. The interval 319–438 (ELHQQPITLK…LVKLKNDLQA (120 aa)) is domain IV, binds dsDNA.

It belongs to the DnaA family. Oligomerizes as a right-handed, spiral filament on DNA at oriC.

The protein localises to the cytoplasm. Functionally, plays an essential role in the initiation and regulation of chromosomal replication. ATP-DnaA binds to the origin of replication (oriC) to initiate formation of the DNA replication initiation complex once per cell cycle. Binds the DnaA box (a 9 base pair repeat at the origin) and separates the double-stranded (ds)DNA. Forms a right-handed helical filament on oriC DNA; dsDNA binds to the exterior of the filament while single-stranded (ss)DNA is stabiized in the filament's interior. The ATP-DnaA-oriC complex binds and stabilizes one strand of the AT-rich DNA unwinding element (DUE), permitting loading of DNA polymerase. After initiation quickly degrades to an ADP-DnaA complex that is not apt for DNA replication. Binds acidic phospholipids. This Limosilactobacillus fermentum (strain NBRC 3956 / LMG 18251) (Lactobacillus fermentum) protein is Chromosomal replication initiator protein DnaA.